We begin with the raw amino-acid sequence, 553 residues long: Chaperonin GroEL (553 aa).

Residues T30 to P33, K51, D87 to T91, G415, and D495 contribute to the ATP site.

The protein belongs to the chaperonin (HSP60) family. Forms a cylinder of 14 subunits composed of two heptameric rings stacked back-to-back. Interacts with the co-chaperonin GroES.

Its subcellular location is the cytoplasm. The enzyme catalyses ATP + H2O + a folded polypeptide = ADP + phosphate + an unfolded polypeptide.. Its function is as follows. Together with its co-chaperonin GroES, plays an essential role in assisting protein folding. The GroEL-GroES system forms a nano-cage that allows encapsulation of the non-native substrate proteins and provides a physical environment optimized to promote and accelerate protein folding. In Buchnera aphidicola subsp. Tuberolachnus salignus, this protein is Chaperonin GroEL.